We begin with the raw amino-acid sequence, 24 residues long: Lectin (24 aa).

This sequence belongs to the leguminous lectin family. As to quaternary structure, homotetramer.

Agglutinates erythrocytes of blood group A. Binds in decreasing order of affinity: N-acetyl-D-galactosamine, D-galactose, and D-galactosamine. In Crotalaria pallida (Smooth rattlebox), this protein is Lectin.